Consider the following 210-residue polypeptide: Uracil phosphoribosyltransferase (210 aa).

5-phospho-alpha-D-ribose 1-diphosphate is bound by residues R78, R103, and 130 to 138; that span reads DPMLATGGS. Uracil is bound by residues I195 and 200 to 202; that span reads GDA. D201 is a binding site for 5-phospho-alpha-D-ribose 1-diphosphate.

This sequence belongs to the UPRTase family. It depends on Mg(2+) as a cofactor.

The enzyme catalyses UMP + diphosphate = 5-phospho-alpha-D-ribose 1-diphosphate + uracil. It functions in the pathway pyrimidine metabolism; UMP biosynthesis via salvage pathway; UMP from uracil: step 1/1. Allosterically activated by GTP. Its function is as follows. Catalyzes the conversion of uracil and 5-phospho-alpha-D-ribose 1-diphosphate (PRPP) to UMP and diphosphate. In Leifsonia xyli subsp. xyli (strain CTCB07), this protein is Uracil phosphoribosyltransferase.